Here is a 330-residue protein sequence, read N- to C-terminus: tRNA U34 carboxymethyltransferase (330 aa).

Carboxy-S-adenosyl-L-methionine is bound by residues K91, W105, K110, G130, 152–154, 181–182, M196, Y200, and R315; these read DPS and IE.

Belongs to the class I-like SAM-binding methyltransferase superfamily. CmoB family. As to quaternary structure, homotetramer.

It carries out the reaction carboxy-S-adenosyl-L-methionine + 5-hydroxyuridine(34) in tRNA = 5-carboxymethoxyuridine(34) in tRNA + S-adenosyl-L-homocysteine + H(+). Catalyzes carboxymethyl transfer from carboxy-S-adenosyl-L-methionine (Cx-SAM) to 5-hydroxyuridine (ho5U) to form 5-carboxymethoxyuridine (cmo5U) at position 34 in tRNAs. In Shewanella halifaxensis (strain HAW-EB4), this protein is tRNA U34 carboxymethyltransferase.